The following is a 360-amino-acid chain: S-adenosylmethionine:tRNA ribosyltransferase-isomerase (360 aa).

Belongs to the QueA family. Monomer.

Its subcellular location is the cytoplasm. The enzyme catalyses 7-aminomethyl-7-carbaguanosine(34) in tRNA + S-adenosyl-L-methionine = epoxyqueuosine(34) in tRNA + adenine + L-methionine + 2 H(+). Its pathway is tRNA modification; tRNA-queuosine biosynthesis. Its function is as follows. Transfers and isomerizes the ribose moiety from AdoMet to the 7-aminomethyl group of 7-deazaguanine (preQ1-tRNA) to give epoxyqueuosine (oQ-tRNA). The polypeptide is S-adenosylmethionine:tRNA ribosyltransferase-isomerase (Rhodopseudomonas palustris (strain ATCC BAA-98 / CGA009)).